Here is a 95-residue protein sequence, read N- to C-terminus: Large ribosomal subunit protein bL25 (95 aa).

The protein belongs to the bacterial ribosomal protein bL25 family. As to quaternary structure, part of the 50S ribosomal subunit; part of the 5S rRNA/L5/L18/L25 subcomplex. Contacts the 5S rRNA. Binds to the 5S rRNA independently of L5 and L18.

This is one of the proteins that binds to the 5S RNA in the ribosome where it forms part of the central protuberance. This is Large ribosomal subunit protein bL25 from Actinobacillus pleuropneumoniae serotype 5b (strain L20).